Here is a 788-residue protein sequence, read N- to C-terminus: Endonuclease MutS2 (788 aa).

332–339 (GPNTGGKT) serves as a coordination point for ATP. The Smr domain maps to 713–788 (VDLRGMDAEE…GTGVTVVEIK (76 aa)).

It belongs to the DNA mismatch repair MutS family. MutS2 subfamily. In terms of assembly, homodimer. Binds to stalled ribosomes, contacting rRNA.

Functionally, endonuclease that is involved in the suppression of homologous recombination and thus may have a key role in the control of bacterial genetic diversity. In terms of biological role, acts as a ribosome collision sensor, splitting the ribosome into its 2 subunits. Detects stalled/collided 70S ribosomes which it binds and splits by an ATP-hydrolysis driven conformational change. Acts upstream of the ribosome quality control system (RQC), a ribosome-associated complex that mediates the extraction of incompletely synthesized nascent chains from stalled ribosomes and their subsequent degradation. Probably generates substrates for RQC. This is Endonuclease MutS2 from Clostridium botulinum (strain 657 / Type Ba4).